Reading from the N-terminus, the 330-residue chain is Methionine import ATP-binding protein MetN (330 aa).

Residues 2 to 241 (IAFRGVSKVY…PSTRLHQLCF (240 aa)) form the ABC transporter domain. Position 38-45 (38-45 (GQSGAGKS)) interacts with ATP.

Belongs to the ABC transporter superfamily. Methionine importer (TC 3.A.1.24) family. In terms of assembly, the complex is composed of two ATP-binding proteins (MetN), two transmembrane proteins (MetI) and a solute-binding protein (MetQ).

The protein resides in the cell inner membrane. The enzyme catalyses L-methionine(out) + ATP + H2O = L-methionine(in) + ADP + phosphate + H(+). The catalysed reaction is D-methionine(out) + ATP + H2O = D-methionine(in) + ADP + phosphate + H(+). Its function is as follows. Part of the ABC transporter complex MetNIQ involved in methionine import. Responsible for energy coupling to the transport system. This Myxococcus xanthus (strain DK1622) protein is Methionine import ATP-binding protein MetN.